Here is a 1172-residue protein sequence, read N- to C-terminus: Carbamoyl phosphate synthase arginine-specific large chain, chloroplastic (1172 aa).

Polar residues predominate over residues 1 to 10 (MATSLSSAPT). Residues 1–37 (MATSLSSAPTQLRPSPSPSHHRLLHRSSLLPFPRRHH) form a disordered region. The N-terminal 50 residues, 1–50 (MATSLSSAPTQLRPSPSPSHHRLLHRSSLLPFPRRHHHRRRRCGALSIAR), are a transit peptide targeting the chloroplast. The segment at 72–473 (GRLAGVRKIM…SFQKAVRSLE (402 aa)) is carboxyphosphate synthetic domain. The ATP site is built by R199, R240, G246, G247, K279, L281, E286, G312, V313, H314, Q356, and E370. In terms of domain architecture, ATP-grasp 1 spans 203-399 (KQAMDRIGLK…IAKMAAKLSV (197 aa)). Residues Q356, E370, and N372 each coordinate Mg(2+). The oligomerization domain stretch occupies residues 474–623 (TGFAGWGCAP…YSSYEYECES (150 aa)). The tract at residues 624–1019 (VPTNKKKVLI…GAFAKAQIAA (396 aa)) is carbamoyl phosphate synthetic domain. The ATP-grasp 2 domain maps to 761-954 (NAILEELGIE…LAKYASLVMS (194 aa)). R797, K836, L838, E843, G869, I870, H871, S872, Q912, and E925 together coordinate ATP. Mg(2+)-binding residues include Q912, E925, and N927. The interval 1020 to 1172 (GQKLPLNGTV…QNLQAAQSAS (153 aa)) is allosteric domain. The 142-residue stretch at 1021–1162 (QKLPLNGTVF…QDYFQTTDAS (142 aa)) folds into the MGS-like domain.

It belongs to the CarB family. In terms of assembly, heterodimer composed of 2 chains; the small (or glutamine) chain promotes the hydrolysis of glutamine to ammonia, which is used by the large (or ammonia) chain to synthesize carbamoyl phosphate. Requires Mg(2+) as cofactor. It depends on Mn(2+) as a cofactor.

The protein resides in the plastid. It localises to the chloroplast. The catalysed reaction is hydrogencarbonate + L-glutamine + 2 ATP + H2O = carbamoyl phosphate + L-glutamate + 2 ADP + phosphate + 2 H(+). The enzyme catalyses hydrogencarbonate + NH4(+) + 2 ATP = carbamoyl phosphate + 2 ADP + phosphate + 2 H(+). Its pathway is amino-acid biosynthesis; L-arginine biosynthesis; carbamoyl phosphate from bicarbonate: step 1/1. In terms of biological role, large subunit of the arginine-specific carbamoyl phosphate synthase (CPSase). CPSase catalyzes the formation of carbamoyl phosphate from the ammonia moiety of glutamine, hydrogencarbonate, and phosphate donated by ATP, constituting the first step of 2 biosynthetic pathways, one leading to arginine and/or urea and the other to pyrimidine nucleotides. The large subunit (synthetase) binds the substrates ammonia (free or transferred from glutamine from the small subunit), hydrogencarbonate and ATP and carries out an ATP-coupled ligase reaction, activating hydrogencarbonate by forming carboxy phosphate which reacts with ammonia to form carbamoyl phosphate. This Oryza sativa subsp. japonica (Rice) protein is Carbamoyl phosphate synthase arginine-specific large chain, chloroplastic (CARB).